The sequence spans 442 residues: tRNA modification GTPase MnmE (442 aa).

Positions 22, 79, and 119 each coordinate (6S)-5-formyl-5,6,7,8-tetrahydrofolate. Positions 216–366 (GIKTCLVGAP…LLEKIKSIFA (151 aa)) constitute a TrmE-type G domain. Asn-226 lines the K(+) pocket. GTP is bound by residues 226–231 (NSGKSS), 245–251 (SEIPGTT), and 270–273 (DTAG). Position 230 (Ser-230) interacts with Mg(2+). Positions 245, 247, and 250 each coordinate K(+). Position 251 (Thr-251) interacts with Mg(2+). Lys-442 is a binding site for (6S)-5-formyl-5,6,7,8-tetrahydrofolate.

The protein belongs to the TRAFAC class TrmE-Era-EngA-EngB-Septin-like GTPase superfamily. TrmE GTPase family. In terms of assembly, homodimer. Heterotetramer of two MnmE and two MnmG subunits. Requires K(+) as cofactor.

It is found in the cytoplasm. Exhibits a very high intrinsic GTPase hydrolysis rate. Involved in the addition of a carboxymethylaminomethyl (cmnm) group at the wobble position (U34) of certain tRNAs, forming tRNA-cmnm(5)s(2)U34. The sequence is that of tRNA modification GTPase MnmE from Mesomycoplasma hyopneumoniae (strain 232) (Mycoplasma hyopneumoniae).